The sequence spans 283 residues: MAHIIDGKAIAAKIRSEIASGVRELQGKGVTPGLAVVLVGDDQASRVYVSMKEKACNDAGIFSVEHKLAAETSEAELLALVELLNNDPKIHGILVQLPLPSQIDTDKVLEAISPFKDVDGFHPYNVGRLSVGKPVFQPCTPYGVMVMLREAGVELKGKEVVVVGRSNIVGKPVAMMCLAEHATVTLCHSRTRDLPDVVRRADVVIAAVGRPEMIKGDWIKEGAVVIDVGINRVGEKKLVGDVEFAGASQRASAITPVPGGVGPMTITMLLQNTLESAKRGMAE.

Residues 164-166 (GRS), serine 189, and isoleucine 230 contribute to the NADP(+) site.

This sequence belongs to the tetrahydrofolate dehydrogenase/cyclohydrolase family. Homodimer.

It carries out the reaction (6R)-5,10-methylene-5,6,7,8-tetrahydrofolate + NADP(+) = (6R)-5,10-methenyltetrahydrofolate + NADPH. The catalysed reaction is (6R)-5,10-methenyltetrahydrofolate + H2O = (6R)-10-formyltetrahydrofolate + H(+). The protein operates within one-carbon metabolism; tetrahydrofolate interconversion. In terms of biological role, catalyzes the oxidation of 5,10-methylenetetrahydrofolate to 5,10-methenyltetrahydrofolate and then the hydrolysis of 5,10-methenyltetrahydrofolate to 10-formyltetrahydrofolate. The protein is Bifunctional protein FolD of Pelobacter propionicus (strain DSM 2379 / NBRC 103807 / OttBd1).